Reading from the N-terminus, the 460-residue chain is NADH-quinone oxidoreductase subunit N (460 aa).

13 helical membrane-spanning segments follow: residues 2–22 (LLPE…AVML), 28–48 (IVAN…LKYS), 65–85 (ANIA…MIIY), 104–124 (ILLS…LLLF), 155–175 (FILG…IYGF), 196–216 (LGLV…LSSA), 230–250 (PIAS…AILL), 263–283 (ISYN…ALGA), 292–312 (LMAY…LLRT), 321–341 (LYML…IMLL), 363–383 (IAAA…LAGF), 400–420 (LLAY…LKII), and 438–458 (YGLL…SFII).

It belongs to the complex I subunit 2 family. As to quaternary structure, NDH-1 is composed of 14 different subunits. Subunits NuoA, H, J, K, L, M, N constitute the membrane sector of the complex.

The protein localises to the cell inner membrane. The catalysed reaction is a quinone + NADH + 5 H(+)(in) = a quinol + NAD(+) + 4 H(+)(out). Functionally, NDH-1 shuttles electrons from NADH, via FMN and iron-sulfur (Fe-S) centers, to quinones in the respiratory chain. The immediate electron acceptor for the enzyme in this species is believed to be ubiquinone. Couples the redox reaction to proton translocation (for every two electrons transferred, four hydrogen ions are translocated across the cytoplasmic membrane), and thus conserves the redox energy in a proton gradient. The chain is NADH-quinone oxidoreductase subunit N from Rickettsia bellii (strain RML369-C).